Here is a 764-residue protein sequence, read N- to C-terminus: 1,4-alpha-glucan branching enzyme GlgB (764 aa).

Asp-431 serves as the catalytic Nucleophile. The Proton donor role is filled by Glu-484.

It belongs to the glycosyl hydrolase 13 family. GlgB subfamily. As to quaternary structure, monomer.

It carries out the reaction Transfers a segment of a (1-&gt;4)-alpha-D-glucan chain to a primary hydroxy group in a similar glucan chain.. It participates in glycan biosynthesis; glycogen biosynthesis. In terms of biological role, catalyzes the formation of the alpha-1,6-glucosidic linkages in glycogen by scission of a 1,4-alpha-linked oligosaccharide from growing alpha-1,4-glucan chains and the subsequent attachment of the oligosaccharide to the alpha-1,6 position. The sequence is that of 1,4-alpha-glucan branching enzyme GlgB from Synechococcus sp. (strain CC9902).